The following is a 72-amino-acid chain: UPF0154 protein BH2350 (72 aa).

Residues 3–23 (WMILLWITLGIVIGIAIGFFI) form a helical membrane-spanning segment.

It belongs to the UPF0154 family.

The protein localises to the membrane. The chain is UPF0154 protein BH2350 from Halalkalibacterium halodurans (strain ATCC BAA-125 / DSM 18197 / FERM 7344 / JCM 9153 / C-125) (Bacillus halodurans).